A 433-amino-acid chain; its full sequence is Enolase (433 aa).

Gln-167 lines the (2R)-2-phosphoglycerate pocket. Catalysis depends on Glu-209, which acts as the Proton donor. Asp-246, Glu-291, and Asp-318 together coordinate Mg(2+). Residues Lys-343, Arg-372, Ser-373, and Lys-394 each coordinate (2R)-2-phosphoglycerate. Lys-343 serves as the catalytic Proton acceptor.

The protein belongs to the enolase family. Component of the RNA degradosome, a multiprotein complex involved in RNA processing and mRNA degradation. Requires Mg(2+) as cofactor.

The protein localises to the cytoplasm. It is found in the secreted. Its subcellular location is the cell surface. The catalysed reaction is (2R)-2-phosphoglycerate = phosphoenolpyruvate + H2O. It functions in the pathway carbohydrate degradation; glycolysis; pyruvate from D-glyceraldehyde 3-phosphate: step 4/5. In terms of biological role, catalyzes the reversible conversion of 2-phosphoglycerate (2-PG) into phosphoenolpyruvate (PEP). It is essential for the degradation of carbohydrates via glycolysis. The polypeptide is Enolase (Photobacterium profundum (strain SS9)).